The primary structure comprises 511 residues: NADH-ubiquinone oxidoreductase chain 4 (511 aa).

The next 14 membrane-spanning stretches (helical) occupy residues 1–21 (MNQI…IIII), 39–59 (ISLL…YLFN), 78–98 (IDGI…ISLI), 116–136 (VLLI…LDLI), 137–157 (TFYI…GKLG), 186–206 (YIFI…GIYI), 220–240 (IILS…GILV), 264–284 (IILA…LILI), 289–309 (VIII…FYIG), 318–338 (IKVI…MSIF), 349–369 (LLIS…VGGI), 388–408 (YMPI…GIPL), 422–442 (IFIY…ITTI), and 476–496 (LLLN…NLII).

The protein belongs to the complex I subunit 4 family.

It is found in the mitochondrion membrane. The enzyme catalyses a ubiquinone + NADH + 5 H(+)(in) = a ubiquinol + NAD(+) + 4 H(+)(out). Its function is as follows. Core subunit of the mitochondrial membrane respiratory chain NADH dehydrogenase (Complex I) that is believed to belong to the minimal assembly required for catalysis. Complex I functions in the transfer of electrons from NADH to the respiratory chain. The immediate electron acceptor for the enzyme is believed to be ubiquinone. The protein is NADH-ubiquinone oxidoreductase chain 4 (ND4) of Wickerhamomyces canadensis (Yeast).